The following is a 372-amino-acid chain: Glutamate 5-kinase (372 aa).

An ATP-binding site is contributed by lysine 14. Substrate-binding residues include serine 54, aspartate 141, and asparagine 153. Position 173-174 (173-174 (TD)) interacts with ATP. The PUA domain maps to 280-358 (RGHVVIDAGA…GEIETVLGYM (79 aa)).

This sequence belongs to the glutamate 5-kinase family.

The protein localises to the cytoplasm. It carries out the reaction L-glutamate + ATP = L-glutamyl 5-phosphate + ADP. The protein operates within amino-acid biosynthesis; L-proline biosynthesis; L-glutamate 5-semialdehyde from L-glutamate: step 1/2. Its function is as follows. Catalyzes the transfer of a phosphate group to glutamate to form L-glutamate 5-phosphate. This is Glutamate 5-kinase from Burkholderia mallei (strain NCTC 10229).